A 78-amino-acid polypeptide reads, in one-letter code: Sec-independent protein translocase protein TatA (78 aa).

Residues 1–21 traverse the membrane as a helical segment; it reads MGSLSIWHWLIVLLIVALVFG. Basic and acidic residues-rich tracts occupy residues 39–57 and 65–78; these read FKEG…RDQL and VDAK…GDSR. The disordered stretch occupies residues 39 to 78; the sequence is FKEGMKDGETPEGQQRDQLSRTNTVDVDAKEKAPHSGDSR.

This sequence belongs to the TatA/E family. In terms of assembly, the Tat system comprises two distinct complexes: a TatABC complex, containing multiple copies of TatA, TatB and TatC subunits, and a separate TatA complex, containing only TatA subunits. Substrates initially bind to the TatABC complex, which probably triggers association of the separate TatA complex to form the active translocon.

The protein localises to the cell inner membrane. In terms of biological role, part of the twin-arginine translocation (Tat) system that transports large folded proteins containing a characteristic twin-arginine motif in their signal peptide across membranes. TatA could form the protein-conducting channel of the Tat system. The protein is Sec-independent protein translocase protein TatA of Paraburkholderia phymatum (strain DSM 17167 / CIP 108236 / LMG 21445 / STM815) (Burkholderia phymatum).